Consider the following 494-residue polypeptide: Sulfate adenylyltransferase subunit 1 (494 aa).

The tr-type G domain maps to 28–242 (TRPLRLITCG…TLELATVRST (215 aa)). The tract at residues 37 to 44 (GSVDDGKS) is G1. 37 to 44 (GSVDDGKS) provides a ligand contact to GTP. The G2 stretch occupies residues 94–98 (GITID). A G3 region spans residues 115-118 (DTPG). GTP contacts are provided by residues 115-119 (DTPGH) and 170-173 (NKID). A G4 region spans residues 170-173 (NKID). The segment at 207-209 (SAL) is G5.

This sequence belongs to the TRAFAC class translation factor GTPase superfamily. Classic translation factor GTPase family. CysN/NodQ subfamily. As to quaternary structure, heterodimer composed of CysD, the smaller subunit, and CysN.

The catalysed reaction is sulfate + ATP + H(+) = adenosine 5'-phosphosulfate + diphosphate. It participates in sulfur metabolism; hydrogen sulfide biosynthesis; sulfite from sulfate: step 1/3. With CysD forms the ATP sulfurylase (ATPS) that catalyzes the adenylation of sulfate producing adenosine 5'-phosphosulfate (APS) and diphosphate, the first enzymatic step in sulfur assimilation pathway. APS synthesis involves the formation of a high-energy phosphoric-sulfuric acid anhydride bond driven by GTP hydrolysis by CysN coupled to ATP hydrolysis by CysD. This Agrobacterium fabrum (strain C58 / ATCC 33970) (Agrobacterium tumefaciens (strain C58)) protein is Sulfate adenylyltransferase subunit 1.